Reading from the N-terminus, the 232-residue chain is Aprataxin-like protein (232 aa).

An HIT domain is found at 38–160; the sequence is LKVYIESPES…MTLDHVSPSL (123 aa). Interaction with DNA regions lie at residues 63-67, 138-149, and 161-165; these read DMFPK, HAGPSMNNLHLH, and KNSAH. His-147 functions as the Nucleophile in the catalytic mechanism. The Zn(2+) site is built by Cys-200 and Cys-203. The interaction with DNA stretch occupies residues 209 to 212; sequence RHFT. Zn(2+) is bound by residues His-217 and Glu-221.

As to quaternary structure, monomer.

Its subcellular location is the nucleus. It localises to the cytoplasm. It carries out the reaction a 5'-end adenosine-5'-diphospho-5'-2'-deoxyribonucleoside-DNA + H2O = a 5'-end 5'-phospho-2'-deoxyribonucleoside-DNA + AMP + 2 H(+). It catalyses the reaction a 5'-end adenosine-5'-diphospho-5'-ribonucleoside-2'-deoxyribonucleotide-DNA + H2O = a 5'-end 5'-phospho-ribonucleoside-2'-deoxyribonucleotide-DNA + AMP + 2 H(+). The enzyme catalyses a 3'-end 2'-deoxyribonucleotide-3'-diphospho-5'-guanosine-DNA + H2O = a 3'-end 2'-deoxyribonucleotide 3'-phosphate-DNA + GMP + 2 H(+). In terms of biological role, DNA-binding protein involved in single-strand DNA break repair, double-strand DNA break repair and base excision repair. Resolves abortive DNA ligation intermediates formed either at base excision sites, or when DNA ligases attempt to repair non-ligatable breaks induced by reactive oxygen species. Catalyzes the release of adenylate groups covalently linked to 5'-phosphate termini, resulting in the production of 5'-phosphate termini that can be efficiently rejoined. Likewise, catalyzes the release of 3'-linked guanosine (DNAppG) and inosine (DNAppI) from DNA, but has higher specific activity with 5'-linked adenosine (AppDNA). This Schizosaccharomyces pombe (strain 972 / ATCC 24843) (Fission yeast) protein is Aprataxin-like protein (hnt3).